Here is a 296-residue protein sequence, read N- to C-terminus: UDP-N-acetylenolpyruvoylglucosamine reductase (296 aa).

The FAD-binding PCMH-type domain maps to 18–189; sequence LGGRALAEVR…TGADIVLRRG (172 aa). The active site involves Arg-166. Residue Cys-218 is the Proton donor of the active site. Glu-289 is a catalytic residue.

It belongs to the MurB family. It depends on FAD as a cofactor.

It localises to the cytoplasm. The catalysed reaction is UDP-N-acetyl-alpha-D-muramate + NADP(+) = UDP-N-acetyl-3-O-(1-carboxyvinyl)-alpha-D-glucosamine + NADPH + H(+). The protein operates within cell wall biogenesis; peptidoglycan biosynthesis. Functionally, cell wall formation. This is UDP-N-acetylenolpyruvoylglucosamine reductase from Nitratidesulfovibrio vulgaris (strain ATCC 29579 / DSM 644 / CCUG 34227 / NCIMB 8303 / VKM B-1760 / Hildenborough) (Desulfovibrio vulgaris).